The primary structure comprises 439 residues: Apolipoprotein N-acyltransferase (439 aa).

A run of 6 helical transmembrane segments spans residues 13 to 33 (LLAGILFYLSFSKLNLYFLVF), 47 to 67 (LFSFGFSAFFLSLLWIRIPLI), 75 to 95 (FIAYPALVLLVLFLSLYQFGL), 97 to 117 (YLLWRVFKFSFFAFPFLYTLV), 149 to 169 (NAGTVFLGSFVVLLISLFPLF), and 175 to 195 (IFSLAIITPLLIYGFIKETSY). The CN hydrolase domain maps to 207–439 (IQPFVPQDVK…GSRGILLFSF (233 aa)). Catalysis depends on glutamate 248, which acts as the Proton acceptor. Lysine 305 is a catalytic residue. Cysteine 355 functions as the Nucleophile in the catalytic mechanism.

The protein belongs to the CN hydrolase family. Apolipoprotein N-acyltransferase subfamily.

It is found in the cell inner membrane. It carries out the reaction N-terminal S-1,2-diacyl-sn-glyceryl-L-cysteinyl-[lipoprotein] + a glycerophospholipid = N-acyl-S-1,2-diacyl-sn-glyceryl-L-cysteinyl-[lipoprotein] + a 2-acyl-sn-glycero-3-phospholipid + H(+). It functions in the pathway protein modification; lipoprotein biosynthesis (N-acyl transfer). Functionally, catalyzes the phospholipid dependent N-acylation of the N-terminal cysteine of apolipoprotein, the last step in lipoprotein maturation. The sequence is that of Apolipoprotein N-acyltransferase from Aquifex aeolicus (strain VF5).